The chain runs to 633 residues: tRNA uridine 5-carboxymethylaminomethyl modification enzyme MnmG (633 aa).

FAD contacts are provided by residues 13–18 (GGGHAG), Val-125, and Ser-180. NAD(+) is bound at residue 273 to 287 (GPRYCPSIEDKITRF). Gln-370 lines the FAD pocket.

This sequence belongs to the MnmG family. As to quaternary structure, homodimer. Heterotetramer of two MnmE and two MnmG subunits. FAD serves as cofactor.

Its subcellular location is the cytoplasm. NAD-binding protein involved in the addition of a carboxymethylaminomethyl (cmnm) group at the wobble position (U34) of certain tRNAs, forming tRNA-cmnm(5)s(2)U34. This chain is tRNA uridine 5-carboxymethylaminomethyl modification enzyme MnmG, found in Alteromonas mediterranea (strain DSM 17117 / CIP 110805 / LMG 28347 / Deep ecotype).